The primary structure comprises 366 residues: Outer membrane protein IIIA (366 aa).

An N-terminal signal peptide occupies residues 1–22 (MNIRMVLLASAAAFAASTPVLA).

Belongs to the alphaproteobacteria porin family. As to quaternary structure, forms calcium-stabilized oligomers. In terms of processing, attached covalently to peptidoglycan.

The protein localises to the cell outer membrane. Its function is as follows. May act as an outer membrane pore. In Rhizobium leguminosarum bv. viciae, this protein is Outer membrane protein IIIA (ropA).